A 353-amino-acid chain; its full sequence is MTIALGRVPKEENDLFDTMDDWLRRDRFVFVGWSGLLLFPCAYFALGGWFTGTTFVTSWYTHGLASSYLEGCNFLTAAVSTPANSLAHSLLLLWGPEAQGDFTRWCQLGGLWTFVALHGAFALIGFMLRQFELARSVQLRPYNAISFSGPIAVFVSVFLIYPLGQSGWFFAPSFGVAAIFRFILFFQGFHNWTLNPFHMMGVAGVLGAALLCAIHGATVENTLFEDGDGANTFRAFNPTQAEETYSMVTANRFWSQIFGVAFSNKRWLHFFMLFVPVTGLWMSAIGVVGLALNLRAYDFVSQEIRAAEDPEFETFYTKNILLNEGIRAWMAAQDQPHENLIFPEEVLPRGNAL.

At Thr-2 the chain carries N-acetylthreonine. Residue Thr-2 is modified to Phosphothreonine. The chain crosses the membrane as a helical span at residues 41–61; the sequence is CAYFALGGWFTGTTFVTSWYT. Residue His-118 coordinates chlorophyll a. The helical transmembrane segment at 125-141 threads the bilayer; the sequence is GFMLRQFELARSVQLRP. The pheophytin a site is built by Gln-130 and Asn-143. A helical membrane pass occupies residues 153–166; that stretch reads VFVSVFLIYPLGQS. Residue His-198 coordinates chlorophyll a. A helical transmembrane segment spans residues 208–228; that stretch reads AALLCAIHGATVENTLFEDGD. A plastoquinone-binding residues include His-215 and Phe-262. His-215 serves as a coordination point for Fe cation. Residue His-269 participates in Fe cation binding. The helical transmembrane segment at 279–295 threads the bilayer; sequence GLWMSAIGVVGLALNLR.

Belongs to the reaction center PufL/M/PsbA/D family. PSII is composed of 1 copy each of membrane proteins PsbA, PsbB, PsbC, PsbD, PsbE, PsbF, PsbH, PsbI, PsbJ, PsbK, PsbL, PsbM, PsbT, PsbX, PsbY, PsbZ, Psb30/Ycf12, at least 3 peripheral proteins of the oxygen-evolving complex and a large number of cofactors. It forms dimeric complexes. Requires The D1/D2 heterodimer binds P680, chlorophylls that are the primary electron donor of PSII, and subsequent electron acceptors. It shares a non-heme iron and each subunit binds pheophytin, quinone, additional chlorophylls, carotenoids and lipids. There is also a Cl(-1) ion associated with D1 and D2, which is required for oxygen evolution. The PSII complex binds additional chlorophylls, carotenoids and specific lipids. as cofactor.

The protein localises to the plastid. It is found in the chloroplast thylakoid membrane. It carries out the reaction 2 a plastoquinone + 4 hnu + 2 H2O = 2 a plastoquinol + O2. Photosystem II (PSII) is a light-driven water:plastoquinone oxidoreductase that uses light energy to abstract electrons from H(2)O, generating O(2) and a proton gradient subsequently used for ATP formation. It consists of a core antenna complex that captures photons, and an electron transfer chain that converts photonic excitation into a charge separation. The D1/D2 (PsbA/PsbD) reaction center heterodimer binds P680, the primary electron donor of PSII as well as several subsequent electron acceptors. D2 is needed for assembly of a stable PSII complex. The polypeptide is Photosystem II D2 protein (Agrostis stolonifera (Creeping bentgrass)).